Reading from the N-terminus, the 458-residue chain is UPF0210 protein MJ1665 (458 aa).

This sequence belongs to the UPF0210 family.

In Methanocaldococcus jannaschii (strain ATCC 43067 / DSM 2661 / JAL-1 / JCM 10045 / NBRC 100440) (Methanococcus jannaschii), this protein is UPF0210 protein MJ1665.